The sequence spans 786 residues: DNA double-strand break repair Rad50 ATPase (786 aa).

Residues K13, 33 to 39 (NGSGKTT), and Q138 contribute to the ATP site. Coiled coils occupy residues 194–249 (LKAE…LKSI), 337–455 (EKAK…RALE), and 551–650 (ALER…VKAL). The Zinc-hook domain maps to 366–459 (EIAELQNKIN…KIRALEKYKG (94 aa)). Residues C411 and C414 each coordinate Zn(2+).

Belongs to the SMC family. RAD50 subfamily. As to quaternary structure, homodimer. Forms a heterotetramer composed of two Mre11 subunits and two Rad50 subunits. Zn(2+) is required as a cofactor.

Functionally, part of the Rad50/Mre11 complex, which is involved in the early steps of DNA double-strand break (DSB) repair. The complex may facilitate opening of the processed DNA ends to aid in the recruitment of HerA and NurA. Rad50 controls the balance between DNA end bridging and DNA resection via ATP-dependent structural rearrangements of the Rad50/Mre11 complex. The polypeptide is DNA double-strand break repair Rad50 ATPase (Nanoarchaeum equitans (strain Kin4-M)).